A 644-amino-acid chain; its full sequence is Chaperone protein HtpG (644 aa).

Residues 1–352 form an a; substrate-binding region; it reads MNARVEQLEF…AQDMSLNVSR (352 aa). The interval 353 to 566 is b; it reads EILQQDRQIK…AFGITPALAR (214 aa). Positions 567–644 are c; the sequence is LYRASGQDIP…ILADRLARTL (78 aa).

This sequence belongs to the heat shock protein 90 family. In terms of assembly, homodimer.

Its subcellular location is the cytoplasm. Its function is as follows. Molecular chaperone. Has ATPase activity. This Mycobacterium avium (strain 104) protein is Chaperone protein HtpG.